Here is a 175-residue protein sequence, read N- to C-terminus: RNA pyrophosphohydrolase (175 aa).

Residues Gly7–Lys150 form the Nudix hydrolase domain. A Nudix box motif is present at residues Gly39 to Gly60.

It belongs to the Nudix hydrolase family. RppH subfamily. A divalent metal cation is required as a cofactor.

In terms of biological role, accelerates the degradation of transcripts by removing pyrophosphate from the 5'-end of triphosphorylated RNA, leading to a more labile monophosphorylated state that can stimulate subsequent ribonuclease cleavage. This is RNA pyrophosphohydrolase from Legionella pneumophila (strain Paris).